A 187-amino-acid polypeptide reads, in one-letter code: GTP cyclohydrolase 1 (187 aa).

Zn(2+) is bound by residues cysteine 76, histidine 79, and cysteine 148.

The protein belongs to the GTP cyclohydrolase I family. As to quaternary structure, toroid-shaped homodecamer, composed of two pentamers of five dimers.

It catalyses the reaction GTP + H2O = 7,8-dihydroneopterin 3'-triphosphate + formate + H(+). The protein operates within cofactor biosynthesis; 7,8-dihydroneopterin triphosphate biosynthesis; 7,8-dihydroneopterin triphosphate from GTP: step 1/1. The chain is GTP cyclohydrolase 1 from Streptococcus agalactiae serotype Ia (strain ATCC 27591 / A909 / CDC SS700).